The primary structure comprises 670 residues: MGETEKRVATHEVRCFSKIKMFLLALTWAYVSKSLSGIYMNTMLTQIERQFDIPTSIVGFINGSFEIGNLLLIIFVSYFGTKLHRPIMIGVGCVIMGLGCFLMSLPHFLMGRYEYETTISPTSNLSSNSFLCMENRSQTLKPTQDPAECIKEMKSLMWIYVLVGNIIRGIGETPIMPLGISYIEDFAKSENSPLYIGILETGKVFGPIVGLLLGSFCASIYVDTGSVNTDDLTITPTDTRWVGAWWIGFLICAGVNILSSIPFFFFPKTLPKEGLQDDVDGTNNDKEEKHREKAKEENRGITKDFLPFMKSLSCNPIYMLLILTSVLQINAFINMFTFLPKYLEQQYGKSTAEVVLLIGVYNLPPICIGYLLIGFIMKKFKITVKKAAYMAFCLSLFEYLLYFLHFMITCDNFPVAGLTASYEGVHHPLYVENKVLADCNRGCSCSTNSWDPVCGDNGLAYMSACLAGCKKSVGTGTNMVFQNCSCIRSSGNSSAVLGLCKKGPECANKLQYFLIMSVIGSFIYSITAIPGYMVLLRCIKPEEKSLGIGLHAFCTRVFAGIPAPIYFGALIDRTCLHWGTLKCGEPGACRMYNINNFRRIYLVLPAALRGSSYLPALFILILMRKFQFPGEIDSSETELAEMKITVKKSECTDVHGSPQVENDGELKTRL.

Residues 1 to 20 (MGETEKRVATHEVRCFSKIK) lie on the Cytoplasmic side of the membrane. Residues 21–40 (MFLLALTWAYVSKSLSGIYM) form a helical membrane-spanning segment. The Extracellular portion of the chain corresponds to 41–59 (NTMLTQIERQFDIPTSIVG). A helical membrane pass occupies residues 60-80 (FINGSFEIGNLLLIIFVSYFG). Residues 81–86 (TKLHRP) lie on the Cytoplasmic side of the membrane. A helical membrane pass occupies residues 87-111 (IMIGVGCVIMGLGCFLMSLPHFLMG). The Extracellular portion of the chain corresponds to 112-155 (RYEYETTISPTSNLSSNSFLCMENRSQTLKPTQDPAECIKEMKS). 2 N-linked (GlcNAc...) asparagine glycosylation sites follow: N124 and N135. Residues 156 to 184 (LMWIYVLVGNIIRGIGETPIMPLGISYIE) traverse the membrane as a helical segment. The Cytoplasmic segment spans residues 185–203 (DFAKSENSPLYIGILETGK). Residues 204–224 (VFGPIVGLLLGSFCASIYVDT) traverse the membrane as a helical segment. Topologically, residues 225-242 (GSVNTDDLTITPTDTRWV) are extracellular. A helical transmembrane segment spans residues 243–267 (GAWWIGFLICAGVNILSSIPFFFFP). Residues 268 to 311 (KTLPKEGLQDDVDGTNNDKEEKHREKAKEENRGITKDFLPFMKS) are Cytoplasmic-facing. Residues 312 to 333 (LSCNPIYMLLILTSVLQINAFI) form a helical membrane-spanning segment. Residues 334-353 (NMFTFLPKYLEQQYGKSTAE) are Extracellular-facing. A helical membrane pass occupies residues 354 to 377 (VVLLIGVYNLPPICIGYLLIGFIM). Residues 378-381 (KKFK) lie on the Cytoplasmic side of the membrane. The chain crosses the membrane as a helical span at residues 382–405 (ITVKKAAYMAFCLSLFEYLLYFLH). Over 406–513 (FMITCDNFPV…PECANKLQYF (108 aa)) the chain is Extracellular. The Kazal-like domain occupies 433–488 (NKVLADCNRGCSCSTNSWDPVCGDNGLAYMSACLAGCKKSVGTGTNMVFQNCSCIR). 3 cysteine pairs are disulfide-bonded: C439–C469, C445–C465, and C454–C486. N483 and N492 each carry an N-linked (GlcNAc...) asparagine glycan. Residues 514 to 536 (LIMSVIGSFIYSITAIPGYMVLL) traverse the membrane as a helical segment. Residues 537–545 (RCIKPEEKS) lie on the Cytoplasmic side of the membrane. Residues 546-571 (LGIGLHAFCTRVFAGIPAPIYFGALI) traverse the membrane as a helical segment. Topologically, residues 572-605 (DRTCLHWGTLKCGEPGACRMYNINNFRRIYLVLP) are extracellular. The chain crosses the membrane as a helical span at residues 606–623 (AALRGSSYLPALFILILM). Residues 624 to 670 (RKFQFPGEIDSSETELAEMKITVKKSECTDVHGSPQVENDGELKTRL) are Cytoplasmic-facing.

It belongs to the organo anion transporter (TC 2.A.60) family. As to expression, highly expressed in the kidney, moderately abundant in the retina, and even lower in the liver. Expressed (at protein level) in the small intestine. Expressed at lower levels in brain,lung, and retina.

The protein resides in the cell membrane. It localises to the basal cell membrane. The enzyme catalyses taurocholate(out) = taurocholate(in). The catalysed reaction is glycocholate(out) = glycocholate(in). It catalyses the reaction taurochenodeoxycholate(out) = taurochenodeoxycholate(in). It carries out the reaction tauroursodeoxycholate(out) = tauroursodeoxycholate(in). The enzyme catalyses 3,3',5'-triiodo-L-thyronine(out) = 3,3',5'-triiodo-L-thyronine(in). The catalysed reaction is L-thyroxine(out) = L-thyroxine(in). It catalyses the reaction taurodeoxycholate(out) = taurodeoxycholate(in). It carries out the reaction glycodeoxycholate(out) = glycodeoxycholate(in). The enzyme catalyses glycochenodeoxycholate(out) = glycochenodeoxycholate(in). The catalysed reaction is glycoursodeoxycholate(out) = glycoursodeoxycholate(in). It catalyses the reaction estrone 3-sulfate(out) = estrone 3-sulfate(in). It carries out the reaction prostaglandin E2(out) = prostaglandin E2(in). The enzyme catalyses substance P(out) = substance P(in). Functionally, na(+)-independent transporter that mediates the cellular uptake of a broad range of organic anions such as the endogenous bile salts cholate and deoxycholate, either in their unconjugated or conjugated forms (taurocholate and glycocholate), estrone 3-sulfate and prostaglandin E2, at the plasma membrane. Responsible for intestinal absorption of bile acids. Capable of thyroid hormone transport (both T3 or 3,3',5'-triiodo-L-thyronine, and T4 or L-tyroxine). Plays roles in blood-brain and -cerebrospinal fluid barrier transport of organic anions and signal mediators, and in hormone uptake by neural cells. May also play a role in the reuptake of neuropeptides such as substance P/TAC1 and vasoactive intestinal peptide/VIP released from retinal neurons. Shows a pH-sensitive substrate specificity which may be ascribed to the protonation state of the binding site and leads to a stimulation of substrate transport in an acidic microenvironment. Hydrogencarbonate/HCO3(-) acts as the probable counteranion that exchanges for organic anions. May contribute to regulate the transport of organic compounds in testis across the blood-testis-barrier. This chain is Solute carrier organic anion transporter family member 1A5 (Slco1a5), found in Rattus norvegicus (Rat).